A 152-amino-acid polypeptide reads, in one-letter code: Nucleoside diphosphate kinase (152 aa).

K9, F57, R85, T91, R102, and N112 together coordinate ATP. Residue H115 is the Pros-phosphohistidine intermediate of the active site.

It belongs to the NDK family. As to quaternary structure, homotetramer. It depends on Mg(2+) as a cofactor.

The protein resides in the cytoplasm. It catalyses the reaction a 2'-deoxyribonucleoside 5'-diphosphate + ATP = a 2'-deoxyribonucleoside 5'-triphosphate + ADP. The enzyme catalyses a ribonucleoside 5'-diphosphate + ATP = a ribonucleoside 5'-triphosphate + ADP. Functionally, major role in the synthesis of nucleoside triphosphates other than ATP. The ATP gamma phosphate is transferred to the NDP beta phosphate via a ping-pong mechanism, using a phosphorylated active-site intermediate. This is Nucleoside diphosphate kinase from Rhodopirellula baltica (strain DSM 10527 / NCIMB 13988 / SH1).